The sequence spans 151 residues: Macrodomain Ter protein (151 aa).

This sequence belongs to the MatP family. As to quaternary structure, homodimer.

It is found in the cytoplasm. Its function is as follows. Required for spatial organization of the terminus region of the chromosome (Ter macrodomain) during the cell cycle. Prevents early segregation of duplicated Ter macrodomains during cell division. Binds specifically to matS, which is a 13 bp signature motif repeated within the Ter macrodomain. In Escherichia fergusonii (strain ATCC 35469 / DSM 13698 / CCUG 18766 / IAM 14443 / JCM 21226 / LMG 7866 / NBRC 102419 / NCTC 12128 / CDC 0568-73), this protein is Macrodomain Ter protein.